The chain runs to 366 residues: Di-N-acetylchitobiase (366 aa).

An N-terminal signal peptide occupies residues 1–22 (MALCGLPEFTLLLLPLLARLSA). A GH18 domain is found at 23–366 (GDCPCSEAAL…EMWGALKPRL (344 aa)). Glu127 (proton donor) is an active-site residue. N-linked (GlcNAc...) asparagine glycosylation is found at Asn131, Asn177, Asn212, Asn246, and Asn283.

The protein belongs to the glycosyl hydrolase 18 family.

It localises to the lysosome. Its function is as follows. Involved in the degradation of asparagine-linked glycoproteins. Hydrolyze of N-acetyl-beta-D-glucosamine (1-4)N-acetylglucosamine chitobiose core from the reducing end of the bond, it requires prior cleavage by glycosylasparaginase. In Mus musculus (Mouse), this protein is Di-N-acetylchitobiase (Ctbs).